The chain runs to 428 residues: Adenylosuccinate synthetase (428 aa).

GTP contacts are provided by residues 12 to 18 (GDEGKGK) and 40 to 42 (GHT). The active-site Proton acceptor is Asp-13. The Mg(2+) site is built by Asp-13 and Gly-40. IMP contacts are provided by residues 13–16 (DEGK), 38–41 (NAGH), Thr-129, Arg-143, Gln-224, Thr-239, and Arg-303. Residue His-41 is the Proton donor of the active site. 299 to 305 (VTTGRSR) is a binding site for substrate. Residues Arg-305, 331–333 (KLD), and 413–415 (GVG) contribute to the GTP site.

The protein belongs to the adenylosuccinate synthetase family. Homodimer. The cofactor is Mg(2+).

It is found in the cytoplasm. It carries out the reaction IMP + L-aspartate + GTP = N(6)-(1,2-dicarboxyethyl)-AMP + GDP + phosphate + 2 H(+). It participates in purine metabolism; AMP biosynthesis via de novo pathway; AMP from IMP: step 1/2. Functionally, plays an important role in the de novo pathway of purine nucleotide biosynthesis. Catalyzes the first committed step in the biosynthesis of AMP from IMP. This chain is Adenylosuccinate synthetase, found in Saccharopolyspora erythraea (strain ATCC 11635 / DSM 40517 / JCM 4748 / NBRC 13426 / NCIMB 8594 / NRRL 2338).